Reading from the N-terminus, the 186-residue chain is C-type lectin domain family 19 member A (186 aa).

The N-terminal stretch at 1 to 19 is a signal peptide; sequence MQRWTLWAAAFLTLHSAQA. The 133-residue stretch at 47 to 179 folds into the C-type lectin domain; the sequence is FKGHCYRFFP…CSRKFPFVCK (133 aa). N-linked (GlcNAc...) asparagine glycosylation occurs at Asn58. 2 disulfides stabilise this stretch: Cys68-Cys178 and Cys151-Cys170.

It is found in the secreted. The protein is C-type lectin domain family 19 member A of Homo sapiens (Human).